We begin with the raw amino-acid sequence, 192 residues long: MAEPLLVVGLGNPGPNYAKTRHNVGFVVADLLAGRIGSGFKAHRKSGADIATGRLAGRAVVLAKPRTYMNESGRNVGPLAKFYSVAPADVIVIHDELDIDFGRIRLKFGGGVAGHNGLKSVAAALGTKDFQRVRVGVGRPPGRKDAATYVLEPFTSVERPEVPTICEQAADATELLIAQGLEPAQNLVHAWA.

Y17 is a binding site for tRNA. The active-site Proton acceptor is H22. TRNA contacts are provided by Y68, N70, and N116.

Belongs to the PTH family. Monomer.

The protein localises to the cytoplasm. It catalyses the reaction an N-acyl-L-alpha-aminoacyl-tRNA + H2O = an N-acyl-L-amino acid + a tRNA + H(+). Hydrolyzes ribosome-free peptidyl-tRNAs (with 1 or more amino acids incorporated), which drop off the ribosome during protein synthesis, or as a result of ribosome stalling. Its function is as follows. Catalyzes the release of premature peptidyl moieties from peptidyl-tRNA molecules trapped in stalled 50S ribosomal subunits, and thus maintains levels of free tRNAs and 50S ribosomes. The chain is Peptidyl-tRNA hydrolase from Mycobacterium sp. (strain JLS).